Here is a 489-residue protein sequence, read N- to C-terminus: Rhamnulokinase (489 aa).

13–17 (ASSGR) contacts ATP. Residues C68 and C222 are joined by a disulfide bond. Residues G83 and 236–238 (HDT) each bind substrate. D237 acts as the Proton acceptor in catalysis. Position 259 (T259) interacts with ATP. Residue N296 coordinates substrate. Q304 contacts ATP. A disulfide bridge connects residues C353 and C370. ATP is bound at residue G402. Residues C413 and C417 are joined by a disulfide bond.

The protein belongs to the rhamnulokinase family. Mg(2+) is required as a cofactor.

It catalyses the reaction L-rhamnulose + ATP = L-rhamnulose 1-phosphate + ADP + H(+). The protein operates within carbohydrate degradation; L-rhamnose degradation; glycerone phosphate from L-rhamnose: step 2/3. Functionally, involved in the catabolism of L-rhamnose (6-deoxy-L-mannose). Catalyzes the transfer of the gamma-phosphate group from ATP to the 1-hydroxyl group of L-rhamnulose to yield L-rhamnulose 1-phosphate. The protein is Rhamnulokinase of Enterobacter sp. (strain 638).